Here is a 454-residue protein sequence, read N- to C-terminus: tRNA-2-methylthio-N(6)-dimethylallyladenosine synthase (454 aa).

The region spanning 6 to 122 is the MTTase N-terminal domain; it reads RRYHITTFGC…LQDLLQEVLA (117 aa). Positions 15, 51, 85, 157, 161, and 164 each coordinate [4Fe-4S] cluster. The 238-residue stretch at 143-380 folds into the Radical SAM core domain; it reads RESTVTAWVN…NHLVAIKAAE (238 aa). Positions 383 to 447 constitute a TRAM domain; that stretch reads QRYLGRIEEV…AFSLTGEPVK (65 aa).

It belongs to the methylthiotransferase family. MiaB subfamily. Monomer. Requires [4Fe-4S] cluster as cofactor.

The protein localises to the cytoplasm. It carries out the reaction N(6)-dimethylallyladenosine(37) in tRNA + (sulfur carrier)-SH + AH2 + 2 S-adenosyl-L-methionine = 2-methylsulfanyl-N(6)-dimethylallyladenosine(37) in tRNA + (sulfur carrier)-H + 5'-deoxyadenosine + L-methionine + A + S-adenosyl-L-homocysteine + 2 H(+). In terms of biological role, catalyzes the methylthiolation of N6-(dimethylallyl)adenosine (i(6)A), leading to the formation of 2-methylthio-N6-(dimethylallyl)adenosine (ms(2)i(6)A) at position 37 in tRNAs that read codons beginning with uridine. The sequence is that of tRNA-2-methylthio-N(6)-dimethylallyladenosine synthase from Gloeothece citriformis (strain PCC 7424) (Cyanothece sp. (strain PCC 7424)).